Reading from the N-terminus, the 403-residue chain is Large ribosomal subunit protein uL3 (403 aa).

The segment at 1 to 37 (MSHRKFSAPRHGSLGFLPRKRSSRHRGKVKSFPKDDP) is disordered. Position 13 is a phosphoserine (S13). Positions 18 to 31 (PRKRSSRHRGKVKS) are enriched in basic residues. Residue K39 forms a Glycyl lysine isopeptide (Lys-Gly) (interchain with G-Cter in SUMO2) linkage. Residue K136 is modified to N6-acetyllysine. Residues K224 and K226 each participate in a glycyl lysine isopeptide (Lys-Gly) (interchain with G-Cter in SUMO2) cross-link. H245 is modified (tele-methylhistidine). 2 positions are modified to N6-acetyllysine; alternate: K286 and K294. K286 is covalently cross-linked (Glycyl lysine isopeptide (Lys-Gly) (interchain with G-Cter in SUMO2); alternate). K294 participates in a covalent cross-link: Glycyl lysine isopeptide (Lys-Gly) (interchain with G-Cter in SUMO1); alternate. A Phosphoserine modification is found at S304. K366 carries the N6-acetyllysine; alternate modification. K366 is covalently cross-linked (Glycyl lysine isopeptide (Lys-Gly) (interchain with G-Cter in SUMO2); alternate). K373 carries the post-translational modification N6-acetyllysine. Residues K386, K393, and K399 each participate in a glycyl lysine isopeptide (Lys-Gly) (interchain with G-Cter in SUMO2) cross-link.

The protein belongs to the universal ribosomal protein uL3 family. In terms of assembly, component of the large ribosomal subunit. Interacts with DHX33. In terms of processing, constitutively monomethylated at His-245 by METTL18. Methylation at His-245 regulates translation elongation by slowing ribosome traversal on tyrosine codons: slower elongation provides enough time for proper folding of synthesized proteins and prevents cellular aggregation of tyrosine-rich proteins It is not required for incorporation of RPL3 into ribosomes.

It is found in the nucleus. The protein resides in the nucleolus. It localises to the cytoplasm. Functionally, component of the large ribosomal subunit. The ribosome is a large ribonucleoprotein complex responsible for the synthesis of proteins in the cell. The polypeptide is Large ribosomal subunit protein uL3 (RPL3) (Macaca fascicularis (Crab-eating macaque)).